Here is a 116-residue protein sequence, read N- to C-terminus: MNEKKQSRLRRAKSTRLHIRALGATRLCVNRTPRHIYAQVISADGGKVLAQASTLDASLRSGTTGNIEAATKVGALIAERAKAAGVTKVAFDRSGFKYHGRIKALADAAREGGLEF.

The protein belongs to the universal ribosomal protein uL18 family. Part of the 50S ribosomal subunit; part of the 5S rRNA/L5/L18/L25 subcomplex. Contacts the 5S and 23S rRNAs.

This is one of the proteins that bind and probably mediate the attachment of the 5S RNA into the large ribosomal subunit, where it forms part of the central protuberance. The protein is Large ribosomal subunit protein uL18 of Acinetobacter baumannii (strain AB307-0294).